Consider the following 419-residue polypeptide: Dual specificity protein phosphatase 7 (419 aa).

The segment at 1–41 (MKNQLRGPPVRAHMSTSGAAAAGGTRAGSEPGAGSGSSAGI) is disordered. Low complexity predominate over residues 15–30 (STSGAAAAGGTRAGSE). The segment covering 31–41 (PGAGSGSSAGI) has biased composition (gly residues). A Rhodanese domain is found at 68 to 187 (GGASLLLLDC…FQTEYSEHCE (120 aa)). The disordered stretch occupies residues 216–240 (CSDGESDRELPSSATESDGSPVPSS). Over residues 227 to 240 (SSATESDGSPVPSS) the composition is skewed to polar residues. The 144-residue stretch at 244–387 (FPVQILPYLY…LLDFERTLGL (144 aa)) folds into the Tyrosine-protein phosphatase domain. The active-site Phosphocysteine intermediate is C331. 331 to 337 (CLAGISR) is a binding site for substrate.

It belongs to the protein-tyrosine phosphatase family. Non-receptor class dual specificity subfamily. As to quaternary structure, interacts with MAPK1/ERK2; the interaction enhances DUSP7 phosphatase activity.

It is found in the cytoplasm. It catalyses the reaction O-phospho-L-tyrosyl-[protein] + H2O = L-tyrosyl-[protein] + phosphate. The catalysed reaction is O-phospho-L-seryl-[protein] + H2O = L-seryl-[protein] + phosphate. The enzyme catalyses O-phospho-L-threonyl-[protein] + H2O = L-threonyl-[protein] + phosphate. Its activity is regulated as follows. Strongly inhibited by sodium orthovanadate. Dual specificity protein phosphatase. Shows high activity towards MAPK1/ERK2. Also has lower activity towards MAPK14 and MAPK8. In arrested oocytes, plays a role in meiotic resumption. Promotes nuclear envelope breakdown and activation of the CDK1/Cyclin-B complex in oocytes, probably by dephosphorylating and inactivating the conventional protein kinase C (cPKC) isozyme PRKCB. May also inactivate PRKCA and/or PRKCG. Also important in oocytes for normal chromosome alignment on the metaphase plate and progression to anaphase, where it might regulate activity of the spindle-assembly checkpoint (SAC) complex. This Rattus norvegicus (Rat) protein is Dual specificity protein phosphatase 7.